Reading from the N-terminus, the 311-residue chain is Class E basic helix-loop-helix protein 22 (311 aa).

Residues 22 to 170 (AKRMESAFRS…GGSKKSKEQK (149 aa)) form a disordered region. A compositionally biased stretch (low complexity) spans 81–96 (GESASRSSVAESSGGE). The segment covering 125–147 (AGGGGGGGGGGGGGPGGGGGGGL) has biased composition (gly residues). The bHLH domain occupies 171–225 (ALRLNINARERRRMHDLNDALDELRAVIPYAHSPSVRKLSKIATLLLAKNYILMQ).

The protein localises to the nucleus. Its function is as follows. May act as a transcriptional repressor. The sequence is that of Class E basic helix-loop-helix protein 22 (BHLHE22) from Gallus gallus (Chicken).